A 728-amino-acid chain; its full sequence is MRSLLLLAPLAWLLLVQAKDDAKLEDNLLVLTVATKETEGFRRFKRSAQFFNYKIQSLGLGEDWSVDGGPAAAGGGQKVRLLKKALEKHADKEDLVILFVDSYDVVFASGPRELLKKFQQAKSQVVFSAEEHIYPDRRLEAKYPTVPDGKRFLGSGGFIGYAPSLSKLVAEWEGQDSDSDQLFYTKIFLNPEKREQINISLDHRCRIFQNLDGALDEVVLKFEMGHVRARNLAYDTLPVVVHGNGPTKLQLNYLGNYIPRFWTFETGCTVCDEGLRSLKGIGDEALPTVLVGVFIEQPTPFLSLFFLRLLRLRYPQKQMRLFIHNQERHHKLQVEQFLAEHGSEYQSVKLVGPEVRMANADARNMGADLCRQDQTCTYYFSVDADVALTEPNSLRLLIEQNKNVIAPLMTRHGRLWSNFWGGLSADGYYARSEDYVDIVQGRRVGVWNVPYISNIYLIKGSALRAELQNVDLFHYSKLDSDMSFCANVRQQEVFMFLTNRHTFGHLLSLDNYQTTHLHNDLWEVFSNPEDWKEKYIHENYTKALAGKLVETPCPDVYWFPIFTEAACDELVEEMEHYGQWSLGDNKDNRIQGGYENVPTIDIHMNQITFEREWHKFLVEYIAPMTEKLYPGYYTRAQFDLAFVVRYKPDEQPSLMPHHDASTFTVNIALNRVGEDYEGGGCRFLRYNCSVRAPRKGWALLHPGRLTHYHEGLPTTKGTRYIAVSFVDP.

The N-terminal stretch at methionine 1–alanine 18 is a signal peptide. N-linked (GlcNAc...) asparagine glycosylation is found at asparagine 198 and asparagine 539. In terms of domain architecture, Fe2OG dioxygenase spans glutamine 637–proline 728. Fe cation-binding residues include histidine 657 and aspartate 659. Asparagine 687 carries an N-linked (GlcNAc...) asparagine glycan. Fe cation is bound at residue histidine 709. Arginine 719 is an active-site residue.

Homodimer. Identified in a complex with P3H3 and P3H4. Fe(2+) is required as a cofactor. Requires L-ascorbate as cofactor. In terms of tissue distribution, highly expressed in the liver, heart, lung, skeletal muscle and kidney.

It is found in the rough endoplasmic reticulum membrane. The enzyme catalyses L-lysyl-[collagen] + 2-oxoglutarate + O2 = (5R)-5-hydroxy-L-lysyl-[collagen] + succinate + CO2. In terms of biological role, part of a complex composed of PLOD1, P3H3 and P3H4 that catalyzes hydroxylation of lysine residues in collagen alpha chains and is required for normal assembly and cross-linkling of collagen fibrils. Forms hydroxylysine residues in -Xaa-Lys-Gly- sequences in collagens. These hydroxylysines serve as sites of attachment for carbohydrate units and are essential for the stability of the intermolecular collagen cross-links. The polypeptide is Procollagen-lysine,2-oxoglutarate 5-dioxygenase 1 (Plod1) (Mus musculus (Mouse)).